The chain runs to 382 residues: Intermediate transcription factor 3 large subunit (382 aa).

Belongs to the orthopoxvirus OPG150 family. In terms of assembly, heterodimerizes with protein A8 to form the virus intermediate transcription factor (VITF)-3.

Its function is as follows. Acts with RNA polymerase to initiate transcription from intermediate gene promoters. The polypeptide is Intermediate transcription factor 3 large subunit (OPG150) (Cynomys gunnisoni (Gunnison's prairie dog)).